The chain runs to 204 residues: N-(5'-phosphoribosyl)anthranilate isomerase (204 aa).

This sequence belongs to the TrpF family.

It catalyses the reaction N-(5-phospho-beta-D-ribosyl)anthranilate = 1-(2-carboxyphenylamino)-1-deoxy-D-ribulose 5-phosphate. Its pathway is amino-acid biosynthesis; L-tryptophan biosynthesis; L-tryptophan from chorismate: step 3/5. The chain is N-(5'-phosphoribosyl)anthranilate isomerase from Bacillus cereus (strain G9842).